A 191-amino-acid polypeptide reads, in one-letter code: Chorion class B protein Ld34 (191 aa).

The first 21 residues, M1–S21, serve as a signal peptide directing secretion.

Belongs to the chorion protein family.

In terms of biological role, this protein is one of many from the eggshell of the gypsy moth. This chain is Chorion class B protein Ld34, found in Lymantria dispar (Gypsy moth).